The following is a 354-amino-acid chain: Transcription factor ATOH1 (354 aa).

Basic and acidic residues predominate over residues 1 to 21 (MSRLLHAEEWAEVKELGDHHR). Disordered stretches follow at residues 1 to 55 (MSRL…ELSL) and 91 to 122 (EAAAPRDEVDGRGELVRRSSGGASSSKSPGPV). Residues 26-38 (HHLPQPPPPPQPP) are compositionally biased toward pro residues. A compositionally biased stretch (basic and acidic residues) spans 94–107 (APRDEVDGRGELVR). Over residues 108–122 (RSSGGASSSKSPGPV) the composition is skewed to low complexity. A bHLH domain is found at 159–211 (QRRLAANARERRRMHGLNHAFDQLRNVIPSFNNDKKLSKYETLQMAQIYINAL). Disordered regions lie at residues 216–277 (QTPS…TRFS) and 312–354 (SPSL…DEAS). Over residues 250 to 264 (NATAAGAQQASGGSQ) the composition is skewed to low complexity. Over residues 335-354 (HRSDGEFSPHSHYSDSDEAS) the composition is skewed to basic and acidic residues.

In terms of assembly, efficient DNA binding requires dimerization with another bHLH protein.

It is found in the nucleus. Its function is as follows. Transcriptional regulator. Activates E box-dependent transcription in collaboration with TCF3/E47, but the activity is completely antagonized by the negative regulator of neurogenesis HES1. Plays a role in the differentiation of subsets of neural cells by activating E box-dependent transcription. This Homo sapiens (Human) protein is Transcription factor ATOH1.